The chain runs to 479 residues: Ribulose bisphosphate carboxylase large chain (479 aa).

Residues 1–2 (MS) constitute a propeptide that is removed on maturation. Residues Asn-123 and Thr-173 each coordinate substrate. Residue Lys-175 is the Proton acceptor of the active site. Lys-177 contacts substrate. 3 residues coordinate Mg(2+): Lys-201, Asp-203, and Glu-204. Lys-201 bears the N6-carboxylysine mark. Ser-208 bears the Phosphoserine mark. His-294 serves as the catalytic Proton acceptor. 2 residues coordinate substrate: Arg-295 and His-327. Thr-330 is subject to Phosphothreonine. Position 379 (Ser-379) interacts with substrate.

Belongs to the RuBisCO large chain family. Type I subfamily. Heterohexadecamer of 8 large chains and 8 small chains; disulfide-linked. The disulfide link is formed within the large subunit homodimers. The cofactor is Mg(2+). The disulfide bond which can form in the large chain dimeric partners within the hexadecamer appears to be associated with oxidative stress and protein turnover.

The protein resides in the plastid. The protein localises to the chloroplast. The catalysed reaction is 2 (2R)-3-phosphoglycerate + 2 H(+) = D-ribulose 1,5-bisphosphate + CO2 + H2O. It catalyses the reaction D-ribulose 1,5-bisphosphate + O2 = 2-phosphoglycolate + (2R)-3-phosphoglycerate + 2 H(+). RuBisCO catalyzes two reactions: the carboxylation of D-ribulose 1,5-bisphosphate, the primary event in carbon dioxide fixation, as well as the oxidative fragmentation of the pentose substrate in the photorespiration process. Both reactions occur simultaneously and in competition at the same active site. In Arabis hirsuta (Hairy rock-cress), this protein is Ribulose bisphosphate carboxylase large chain.